A 267-amino-acid polypeptide reads, in one-letter code: Staphylococcal secretory antigen ssaA2 (267 aa).

Residues 1-27 form the signal peptide; sequence MKKIATATIATAGFATIAIASGNQAHA. Repeat copies occupy residues 83–85, 86–88, 89–91, 95–97, 101–103, 104–106, and 113–115. The tract at residues 83-115 is 7 X 3 AA repeats of Y-[NS]-N; it reads YNNYNNYNNGYSYNNYSRYNNYSNNNQSYNYNN. A Peptidase C51 domain is found at 146–267; the sequence is MAPSSNGRSI…SQAAGYNFIH (122 aa).

It localises to the secreted. Its function is as follows. Not known; immunogenic protein. This chain is Staphylococcal secretory antigen ssaA2 (ssaA2), found in Staphylococcus aureus (strain NCTC 8325 / PS 47).